The following is a 219-amino-acid chain: 2-hydroxy-3-keto-5-methylthiopentenyl-1-phosphate phosphatase (219 aa).

The protein belongs to the HAD-like hydrolase superfamily. MtnX family.

It carries out the reaction 2-hydroxy-5-methylsulfanyl-3-oxopent-1-enyl phosphate + H2O = 1,2-dihydroxy-5-(methylsulfanyl)pent-1-en-3-one + phosphate. It functions in the pathway amino-acid biosynthesis; L-methionine biosynthesis via salvage pathway; L-methionine from S-methyl-5-thio-alpha-D-ribose 1-phosphate: step 4/6. In terms of biological role, dephosphorylates 2-hydroxy-3-keto-5-methylthiopentenyl-1-phosphate (HK-MTPenyl-1-P) yielding 1,2-dihydroxy-3-keto-5-methylthiopentene (DHK-MTPene). This is 2-hydroxy-3-keto-5-methylthiopentenyl-1-phosphate phosphatase from Bacillus cereus (strain ZK / E33L).